The primary structure comprises 86 residues: Anti-adapter protein IraP (86 aa).

Residues 1–36 (MKNLIAELLFKLAQKEEESKELCAQVEALEIIVTAM) are a coiled coil.

Belongs to the IraP family. In terms of assembly, interacts with RssB.

It localises to the cytoplasm. In terms of biological role, inhibits RpoS proteolysis by regulating RssB activity, thereby increasing the stability of the sigma stress factor RpoS especially during phosphate starvation, but also in stationary phase and during nitrogen starvation. Its effect on RpoS stability is due to its interaction with RssB, which probably blocks the interaction of RssB with RpoS, and the consequent delivery of the RssB-RpoS complex to the ClpXP protein degradation pathway. The sequence is that of Anti-adapter protein IraP from Escherichia coli (strain SE11).